Consider the following 486-residue polypeptide: ATP synthase subunit beta (486 aa).

ATP is bound at residue 164–171; sequence GGAGVGKT.

The protein belongs to the ATPase alpha/beta chains family. F-type ATPases have 2 components, CF(1) - the catalytic core - and CF(0) - the membrane proton channel. CF(1) has five subunits: alpha(3), beta(3), gamma(1), delta(1), epsilon(1). CF(0) has four main subunits: a(1), b(1), b'(1) and c(9-12).

Its subcellular location is the cellular thylakoid membrane. It catalyses the reaction ATP + H2O + 4 H(+)(in) = ADP + phosphate + 5 H(+)(out). Functionally, produces ATP from ADP in the presence of a proton gradient across the membrane. The catalytic sites are hosted primarily by the beta subunits. The chain is ATP synthase subunit beta from Prochlorococcus marinus (strain MIT 9515).